A 236-amino-acid chain; its full sequence is MTSRLFALIPCAGTGSRSGAPMPKQYRTVAGRDMLHYSLAAFDACSEFAQTLVVIAPDDQHFDARRFGGLRFAVQRCGGASRQASVLNGLHALAGFGAHDDDWVLVHDAARPGITPALIRALVGALKDDAVGGIMALPVADTLKRVAPGTDNRIDHTEPRDGLWQAQTPQMFRIGMLRDAILRAQSDGHDLTDEASAIEWSGHAPRLVQGSLRNFKVTYPEDFDLAEAILGRGAAG.

The protein belongs to the IspD/TarI cytidylyltransferase family. IspD subfamily.

It carries out the reaction 2-C-methyl-D-erythritol 4-phosphate + CTP + H(+) = 4-CDP-2-C-methyl-D-erythritol + diphosphate. It functions in the pathway isoprenoid biosynthesis; isopentenyl diphosphate biosynthesis via DXP pathway; isopentenyl diphosphate from 1-deoxy-D-xylulose 5-phosphate: step 2/6. Catalyzes the formation of 4-diphosphocytidyl-2-C-methyl-D-erythritol from CTP and 2-C-methyl-D-erythritol 4-phosphate (MEP). The protein is 2-C-methyl-D-erythritol 4-phosphate cytidylyltransferase of Paraburkholderia phymatum (strain DSM 17167 / CIP 108236 / LMG 21445 / STM815) (Burkholderia phymatum).